The primary structure comprises 132 residues: Small ribosomal subunit protein uS13 (132 aa).

A compositionally biased stretch (basic residues) spans 101-125 (RGLPVRGQRTKTNARTRKGPRKTVA). The tract at residues 101–132 (RGLPVRGQRTKTNARTRKGPRKTVANKKIETR) is disordered.

The protein belongs to the universal ribosomal protein uS13 family. In terms of assembly, part of the 30S ribosomal subunit. Forms a loose heterodimer with protein S19. Forms two bridges to the 50S subunit in the 70S ribosome.

Its function is as follows. Located at the top of the head of the 30S subunit, it contacts several helices of the 16S rRNA. In the 70S ribosome it contacts the 23S rRNA (bridge B1a) and protein L5 of the 50S subunit (bridge B1b), connecting the 2 subunits; these bridges are implicated in subunit movement. Contacts the tRNAs in the A and P-sites. This is Small ribosomal subunit protein uS13 from Ureaplasma urealyticum serovar 10 (strain ATCC 33699 / Western).